The following is a 2259-amino-acid chain: Putative Polycomb group protein ASXL3 (2259 aa).

Residues 10–83 (RTWAEAARLA…KSGLYALRKE (74 aa)) enclose the HTH HARE-type domain. The interval 181 to 230 (VVLTPLKVSDEQSDSPSGSESKNGEADSSDKEMKHGQKSPTGKQTSQHLK) is disordered. Residues 202-215 (KNGEADSSDKEMKH) show a composition bias toward basic and acidic residues. Positions 218 to 227 (KSPTGKQTSQ) are enriched in polar residues. The DEUBAD domain maps to 253-362 (PGSILVNTNL…FERFYGERSG (110 aa)). Disordered stretches follow at residues 364-399 (SREE…AQNA), 607-643 (CISE…CTPA), 703-810 (EASP…IPEP), 857-1012 (SEMT…PLKI), 1025-1049 (SQPV…NTGA), 1126-1150 (RLPS…TKME), 1433-1462 (LSGE…GGFV), 1614-1643 (DPMR…GLKA), 1687-1719 (DFPG…TTSP), and 1993-2075 (NMLS…TTKR). 3 stretches are compositionally biased toward polar residues: residues 607–617 (CISETSFSSES), 630–643 (GETQ…CTPA), and 703–717 (EASP…SEAS). Residues 722–741 (LPPTSETSSESSMPLTSETP) show a composition bias toward low complexity. 2 stretches are compositionally biased toward polar residues: residues 770 to 781 (KSPSGSEEANSP) and 926 to 945 (QSST…SEPS). 2 stretches are compositionally biased toward basic and acidic residues: residues 949–985 (DGIR…DDQS) and 995–1006 (PEKEQPPREEPR). Residues 1034 to 1043 (RASTSTSVSS) show a composition bias toward low complexity. Residues 1437 to 1448 (NLDNNSGPLNRT) are compositionally biased toward polar residues. Polar residues predominate over residues 1699 to 1719 (EVTSSASVQPTQTMKPSTTSP). Over residues 2023–2055 (PLPPPPPPPPPPPPPLALPPPPPPPPPLPPPLP) the composition is skewed to pro residues. The PHD-type; atypical zinc-finger motif lies at 2221–2258 (ELKCSCRLKAMIVCKGCGAFCHDDCIGPSKLCVACLVV).

The protein belongs to the Asx family. Core component of the polycomb repressive deubiquitinase (PR-DUB) complex, at least composed of BAP1, one of ASXL1, ASXL2 or (probably) ASXL3, and one of MBD5 or MBD6. Distinct combinations of ASXL and MBD proteins may preferentially bind specific histone modification marks. The PR-DUB core associates with a number of accessory proteins, including FOXK1, FOXK2, KDM1B, HCFC1 and OGT; KDM1B specifically associates with ASXL2 PR-DUB complexes. Interacts (via PHD domain) with MBD5 and MBD6 (via MBD domain); the interaction is probably direct and mediates association of MBD proteins with the PR-DUB core.

Its subcellular location is the nucleus. Its function is as follows. Putative Polycomb group (PcG) protein. PcG proteins act by forming multiprotein complexes, which are required to maintain the transcriptionally repressive state of homeotic genes throughout development. PcG proteins are not required to initiate repression, but to maintain it during later stages of development. They probably act via methylation of histones, rendering chromatin heritably changed in its expressibility. Non-catalytic component of the PR-DUB complex, a complex that specifically mediates deubiquitination of histone H2A monoubiquitinated at 'Lys-119' (H2AK119ub1). The PR-DUB complex is an epigenetic regulator of gene expression and acts as a transcriptional coactivator, affecting genes involved in development, cell communication, signaling, cell proliferation and cell viability. ASXL1, ASXL2 and ASXL3 function redundantly in the PR-DUB complex and are essential for chromatin recruitment and transcriptional activation of associated genes. The chain is Putative Polycomb group protein ASXL3 (Asxl3) from Mus musculus (Mouse).